We begin with the raw amino-acid sequence, 128 residues long: Sulfurtransferase TusD (128 aa).

Cys-78 acts as the Cysteine persulfide intermediate in catalysis.

The protein belongs to the DsrE/TusD family. As to quaternary structure, heterohexamer, formed by a dimer of trimers. The hexameric TusBCD complex contains 2 copies each of TusB, TusC and TusD. The TusBCD complex interacts with TusE.

Its subcellular location is the cytoplasm. Part of a sulfur-relay system required for 2-thiolation of 5-methylaminomethyl-2-thiouridine (mnm(5)s(2)U) at tRNA wobble positions. Accepts sulfur from TusA and transfers it in turn to TusE. This is Sulfurtransferase TusD from Buchnera aphidicola subsp. Acyrthosiphon pisum (strain 5A).